Consider the following 645-residue polypeptide: Cyclic nucleotide-gated channel rod photoreceptor subunit alpha (645 aa).

The Cytoplasmic segment spans residues 1–121; that stretch reads MKVGVIETHH…PAGNMYYNWL (121 aa). The interval 53–100 is disordered; the sequence is NNNSNKDEEKKKKKEKKSKSENKKDGERQKNKEKKEKHKNKDKKKGKE. Residues 70-86 show a composition bias toward basic and acidic residues; it reads SKSENKKDGERQKNKEK. The segment covering 87–96 has biased composition (basic residues); it reads KEKHKNKDKK. Residues 122–143 traverse the membrane as a helical segment; it reads FCITMPVMYNWTMIIARACFDE. The Extracellular portion of the chain corresponds to 144–153; it reads LQNDYLAVWF. Residues 154 to 174 traverse the membrane as a helical segment; sequence IVDYVSDVIYIADMFVRTRTG. Residues 175–199 are Cytoplasmic-facing; that stretch reads YLEQGLLVKEEQKLKEKYKSSLQFK. Residues 200-218 traverse the membrane as a helical segment; sequence LDFLSIIPTDLLYFKLGLN. At 219–223 the chain is on the extracellular side; sequence YPELR. A helical membrane pass occupies residues 224–242; it reads INRLLRVARMFEFFQRTET. Residues 243 to 249 are Cytoplasmic-facing; sequence RTNYPNI. The chain crosses the membrane as a helical span at residues 250-273; that stretch reads FRISNLVMYIVIIIHWNACVYYSI. The Extracellular portion of the chain corresponds to 274-296; sequence SKAIGFGADTWVYPNTSHPEFAR. The next 2 helical transmembrane spans lie at 297–331 and 332–356; these read LTRK…FFVV and VDFL…SNMN. At 357-645 the chain is on the cytoplasmic side; the sequence is AARAEFQAKI…TDKPGVTKTE (289 aa). Residues 439–561, Glu498, and Arg513 contribute to the 3',5'-cyclic GMP site; that span reads LLVE…DGLL.

This sequence belongs to the cyclic nucleotide-gated cation channel (TC 1.A.1.5) family.

It localises to the membrane. Functionally, visual signal transduction is mediated by a G-protein coupled cascade using cGMP as second messenger. This protein can be activated by cGMP which leads to an opening of the cation channel and thereby causing a depolarization of rod photoreceptors. The polypeptide is Cyclic nucleotide-gated channel rod photoreceptor subunit alpha (Gallus gallus (Chicken)).